Consider the following 614-residue polypeptide: UvrABC system protein C (614 aa).

The GIY-YIG domain occupies 14 to 91 (TSPGCYIHKD…IKENKPKYNI (78 aa)). The region spanning 196–231 (NKIIDELKGKMAAAAQTMEFERAAEYRDLIQAIGTL) is the UVR domain. The interval 595–614 (LPQVAEERVDYQTEGNHNKP) is disordered.

The protein belongs to the UvrC family. As to quaternary structure, interacts with UvrB in an incision complex.

The protein resides in the cytoplasm. The UvrABC repair system catalyzes the recognition and processing of DNA lesions. UvrC both incises the 5' and 3' sides of the lesion. The N-terminal half is responsible for the 3' incision and the C-terminal half is responsible for the 5' incision. The protein is UvrABC system protein C of Streptococcus pneumoniae (strain Taiwan19F-14).